Reading from the N-terminus, the 224-residue chain is Myogenin (224 aa).

Residues Ser77 and Ser79 each carry the phosphoserine; by CaMK2G modification. Positions 81–132 (DRRRAATLREKRRLKKVNEAFEALKRSTLLNPNQRLPKVEILRSAIQYIERL) constitute a bHLH domain. Phosphothreonine; by CaMK2G is present on Thr87.

Homodimer and heterodimer with E12; heterodimerization enhances MYOG DNA-binding and transcriptional activities. Interacts with SMARCA4/BRG1/BAF190A. Interacts (via C-terminal region) with SSRP1 and SUPT16H; the interaction is indicative of an interaction with the FACT complex. nteracts with CSRP3. Post-translationally, phosphorylated by CAMK2G on threonine and serine amino acids in a muscle activity-dependent manner. Phosphorylation of Thr-87 impairs both DNA-binding and trans-activation functions in contracting muscles. In terms of tissue distribution, expressed in myoblast cells. Expressed weakly in myotubes (at protein level). Expressed strongly in denervated muscles and in satellite cells isolated from denervated muscles. Expressed weakly in innervated muscle and in satellite cells isolated from innervated muscles.

The protein localises to the nucleus. In terms of biological role, acts as a transcriptional activator that promotes transcription of muscle-specific target genes and plays a role in muscle differentiation, cell cycle exit and muscle atrophy. Essential for the development of functional embryonic skeletal fiber muscle differentiation. However is dispensable for postnatal skeletal muscle growth; phosphorylation by CAMK2G inhibits its transcriptional activity in respons to muscle activity. Required for the recruitment of the FACT complex to muscle-specific promoter regions, thus promoting gene expression initiation. During terminal myoblast differentiation, plays a role as a strong activator of transcription at loci with an open chromatin structure previously initiated by MYOD1. Together with MYF5 and MYOD1, co-occupies muscle-specific gene promoter core regions during myogenesis. Also cooperates with myocyte-specific enhancer factor MEF2D and BRG1-dependent recruitment of SWI/SNF chromatin-remodeling enzymes to alter chromatin structure at myogenic late gene promoters. Facilitates cell cycle exit during terminal muscle differentiation through the up-regulation of miR-20a expression, which in turn represses genes involved in cell cycle progression. Binds to the E-box containing (E1) promoter region of the miR-20a gene. Also plays a role in preventing reversal of muscle cell differentiation. Contributes to the atrophy-related gene expression in adult denervated muscles. Induces fibroblasts to differentiate into myoblasts. This chain is Myogenin (Myog), found in Mus musculus (Mouse).